A 364-amino-acid chain; its full sequence is Tyrosine--tRNA ligase (364 aa).

L-tyrosine is bound by residues Tyr-41, Tyr-167, Gln-171, Asp-174, and Gln-189. Residues 238–242 (KMSKS) carry the 'KMSKS' region motif. Lys-241 provides a ligand contact to ATP.

Belongs to the class-I aminoacyl-tRNA synthetase family. TyrS type 4 subfamily. In terms of assembly, homodimer.

The protein localises to the cytoplasm. The catalysed reaction is tRNA(Tyr) + L-tyrosine + ATP = L-tyrosyl-tRNA(Tyr) + AMP + diphosphate + H(+). Functionally, catalyzes the attachment of tyrosine to tRNA(Tyr) in a two-step reaction: tyrosine is first activated by ATP to form Tyr-AMP and then transferred to the acceptor end of tRNA(Tyr). In Sulfurisphaera tokodaii (strain DSM 16993 / JCM 10545 / NBRC 100140 / 7) (Sulfolobus tokodaii), this protein is Tyrosine--tRNA ligase.